The sequence spans 377 residues: Acetylornithine aminotransferase (377 aa).

Pyridoxal 5'-phosphate is bound by residues 94-95 (GT) and Phe-121. Arg-124 lines the N(2)-acetyl-L-ornithine pocket. 206-209 (DEIQ) serves as a coordination point for pyridoxal 5'-phosphate. Lys-235 bears the N6-(pyridoxal phosphate)lysine mark. Position 263 (Ser-263) interacts with N(2)-acetyl-L-ornithine. Thr-264 is a pyridoxal 5'-phosphate binding site.

This sequence belongs to the class-III pyridoxal-phosphate-dependent aminotransferase family. ArgD subfamily. In terms of assembly, homodimer. Requires pyridoxal 5'-phosphate as cofactor.

It localises to the cytoplasm. The enzyme catalyses N(2)-acetyl-L-ornithine + 2-oxoglutarate = N-acetyl-L-glutamate 5-semialdehyde + L-glutamate. Its pathway is amino-acid biosynthesis; L-arginine biosynthesis; N(2)-acetyl-L-ornithine from L-glutamate: step 4/4. This is Acetylornithine aminotransferase from Lactococcus lactis subsp. lactis (strain IL1403) (Streptococcus lactis).